The following is an 867-amino-acid chain: Pentatricopeptide repeat-containing protein At2g39230, mitochondrial (867 aa).

The transit peptide at 1–49 directs the protein to the mitochondrion; sequence MTTFMVSKRFRPPIFLHRFINPKPISSQTRFLHPPDNQSRDISDSTTET. The disordered stretch occupies residues 27–74; it reads SQTRFLHPPDNQSRDISDSTTETISTLEFPHKTSVPNHSPLTSTSETE. The span at 60–72 shows a compositional bias: polar residues; it reads SVPNHSPLTSTSE. PPR repeat units lie at residues 168–202, 203–237, 238–272, 273–307, 309–343, 344–378, 379–413, 414–444, 448–482, 483–517, 518–552, 553–588, 589–623, 624–658, 659–693, 694–728, 729–763, 764–798, and 799–833; these read TPRA…KVVP, FVPY…GVAG, DNVT…GAEP, DGLL…LGVP, SQET…GIPM, SVIA…GLAP, DKVM…RIAP, SSVL…SFES, HGFM…GIEP, NVVF…GLEP, NNFT…NFEA, NEVI…RYSM, SCTS…GKSP, NVVT…ELKL, DLPA…GLMP, NVSV…GISC, DLFT…GIVP, DEIL…DVTP, and NVLL…GIVH.

This sequence belongs to the PPR family. P subfamily. As to expression, expressed in lateral organ junctions and shoot apical meristem (SAM).

Its subcellular location is the mitochondrion. Involved in lateral organ development and boundary demarcation. The sequence is that of Pentatricopeptide repeat-containing protein At2g39230, mitochondrial (LOJ) from Arabidopsis thaliana (Mouse-ear cress).